We begin with the raw amino-acid sequence, 103 residues long: UPF0298 protein LACR_0404 (103 aa).

It belongs to the UPF0298 family.

The protein localises to the cytoplasm. In Lactococcus lactis subsp. cremoris (strain SK11), this protein is UPF0298 protein LACR_0404.